The following is a 356-amino-acid chain: 3-dehydroquinate synthase (356 aa).

NAD(+) is bound by residues 106–110 (GVVGD), 130–131 (TT), Lys-143, and Lys-152. Residues Glu-185, His-248, and His-265 each contribute to the Zn(2+) site.

It belongs to the sugar phosphate cyclases superfamily. Dehydroquinate synthase family. The cofactor is Co(2+). Zn(2+) is required as a cofactor. NAD(+) serves as cofactor.

It localises to the cytoplasm. The catalysed reaction is 7-phospho-2-dehydro-3-deoxy-D-arabino-heptonate = 3-dehydroquinate + phosphate. Its pathway is metabolic intermediate biosynthesis; chorismate biosynthesis; chorismate from D-erythrose 4-phosphate and phosphoenolpyruvate: step 2/7. In terms of biological role, catalyzes the conversion of 3-deoxy-D-arabino-heptulosonate 7-phosphate (DAHP) to dehydroquinate (DHQ). In Thermoanaerobacter pseudethanolicus (strain ATCC 33223 / 39E) (Clostridium thermohydrosulfuricum), this protein is 3-dehydroquinate synthase.